The chain runs to 229 residues: Elongation factor 1-delta 1 (229 aa).

A disordered region spans residues 80–109 (ESTAVPSASTPDVADAKAPAADDDDDDDVD). A compositionally biased stretch (acidic residues) spans 100 to 109 (ADDDDDDDVD).

This sequence belongs to the EF-1-beta/EF-1-delta family. In terms of assembly, EF-1 is composed of 4 subunits: alpha, beta (1B-alpha=beta'), delta (1B-beta), and gamma (1B-gamma).

Functionally, EF-1-beta and EF-1-beta' stimulate the exchange of GDP bound to EF-1-alpha to GTP. The polypeptide is Elongation factor 1-delta 1 (Oryza sativa subsp. japonica (Rice)).